The chain runs to 96 residues: Large ribosomal subunit protein eL43 (96 aa).

Cys41, Cys44, Cys59, and Cys62 together coordinate Zn(2+). A C4-type zinc finger spans residues 41-62 (CPVCAFPKLKRAGTSIWVCEKC).

It belongs to the eukaryotic ribosomal protein eL43 family. Putative zinc-binding subfamily. As to quaternary structure, part of the 50S ribosomal subunit. The cofactor is Zn(2+).

Its function is as follows. Binds to the 23S rRNA. The protein is Large ribosomal subunit protein eL43 of Methanococcus maripaludis (strain DSM 14266 / JCM 13030 / NBRC 101832 / S2 / LL).